The sequence spans 388 residues: Succinate--CoA ligase [ADP-forming] subunit beta (388 aa).

The ATP-grasp domain maps to 9–245 (KELLKSYGLP…KSQENERELK (237 aa)). Residues Lys-46, 53–55 (GRG), Glu-100, Tyr-103, and Glu-108 each bind ATP. Asn-200 and Asp-214 together coordinate Mg(2+). Substrate is bound by residues Asn-265 and 322-324 (GIV).

The protein belongs to the succinate/malate CoA ligase beta subunit family. As to quaternary structure, heterotetramer of two alpha and two beta subunits. Mg(2+) is required as a cofactor.

It catalyses the reaction succinate + ATP + CoA = succinyl-CoA + ADP + phosphate. The enzyme catalyses GTP + succinate + CoA = succinyl-CoA + GDP + phosphate. It participates in carbohydrate metabolism; tricarboxylic acid cycle; succinate from succinyl-CoA (ligase route): step 1/1. Succinyl-CoA synthetase functions in the citric acid cycle (TCA), coupling the hydrolysis of succinyl-CoA to the synthesis of either ATP or GTP and thus represents the only step of substrate-level phosphorylation in the TCA. The beta subunit provides nucleotide specificity of the enzyme and binds the substrate succinate, while the binding sites for coenzyme A and phosphate are found in the alpha subunit. The protein is Succinate--CoA ligase [ADP-forming] subunit beta of Psychrobacter cryohalolentis (strain ATCC BAA-1226 / DSM 17306 / VKM B-2378 / K5).